Consider the following 331-residue polypeptide: UPF0324 membrane protein SAR0338 (331 aa).

11 helical membrane-spanning segments follow: residues 9–26, 31–48, 69–88, 93–115, 122–144, 154–176, 183–202, 217–234, 247–269, 273–295, and 308–330; these read FMIG…SFLA, ILDK…AILY, LLRF…DIIG, LLAI…NKLL, ALLL…APIF, SIGI…YAIF, YGAW…LAGG, LGRV…ILIM, ISIP…VTIP, LNIL…GLNV, and LMTI…HWLY.

Belongs to the UPF0324 family.

Its subcellular location is the cell membrane. The protein is UPF0324 membrane protein SAR0338 of Staphylococcus aureus (strain MRSA252).